A 222-amino-acid polypeptide reads, in one-letter code: Flagellar L-ring protein (222 aa).

The first 21 residues, methionine 1–glycine 21, serve as a signal peptide directing secretion. The N-palmitoyl cysteine moiety is linked to residue cysteine 22. Residue cysteine 22 is the site of S-diacylglycerol cysteine attachment.

It belongs to the FlgH family. In terms of assembly, the basal body constitutes a major portion of the flagellar organelle and consists of four rings (L,P,S, and M) mounted on a central rod.

The protein localises to the cell outer membrane. It is found in the bacterial flagellum basal body. Its function is as follows. Assembles around the rod to form the L-ring and probably protects the motor/basal body from shearing forces during rotation. This is Flagellar L-ring protein from Methylobacillus flagellatus (strain ATCC 51484 / DSM 6875 / VKM B-1610 / KT).